A 339-amino-acid chain; its full sequence is FR-33289 synthase (339 aa).

Fe(2+)-binding residues include His-150, Asp-152, and His-288.

Belongs to the TfdA dioxygenase family. Homodimer. The cofactor is Fe(2+).

It catalyses the reaction 3-(N-acetyl-N-hydroxy)aminopropylphosphonate + 2-oxoglutarate + O2 = (R)-(3-(acetylhydroxyamino)-2-hydroxypropyl)phosphonate + succinate + CO2. The protein operates within antibiotic biosynthesis. Functionally, monooxygenase involved in the biosynthesis of the phosphonate antibiotic FR-33289, an antimalarial agent. Catalyzes the oxidative decarboxylation of the antibiotic FR-900098 (3-(N-acetyl-N-hydroxy)aminopropylphosphonate) to form FR-33289 ((R)-(3-(acetylhydroxyamino)-2-hydroxypropyl)phosphonate). The chain is FR-33289 synthase from Streptomyces rubellomurinus (strain ATCC 31215).